Reading from the N-terminus, the 580-residue chain is Zinc finger protein 271 (580 aa).

C2H2-type zinc fingers lie at residues 78–100, 104–126, 132–154, 160–182, 188–210, 216–238, 244–266, 272–294, 300–322, 328–350, 356–378, 384–406, 412–434, 440–462, 468–490, 496–518, 524–545, and 551–573; these read YNCD…QRTH, YECE…QRIH, YPCS…QRVH, YKCD…QRIH, YQCS…LRIH, YMCN…QRIH, YPCA…RRIH, YKCS…QRIH, YPCN…QRIH, YPCS…YRIH, YECD…QRIH, YPCN…QRVH, YTCN…QRVH, YHCS…HRVH, YACT…QRIH, YKCM…QRIH, and YPCA…QRVH.

Belongs to the krueppel C2H2-type zinc-finger protein family. Selectively expressed in adult testis.

Its subcellular location is the nucleus. Functionally, may act to control gene activity during the pachytene stage of meiotic prophase. May function as a transcription activator. The protein is Zinc finger protein 271 (Znf271) of Mus musculus (Mouse).